Here is an 84-residue protein sequence, read N- to C-terminus: Three-finger toxin MALT0070C (84 aa).

An N-terminal signal peptide occupies residues 1 to 21 (MKTLLLTLVVVTIVCLDLGYT). 4 disulfides stabilise this stretch: Cys-24–Cys-43, Cys-36–Cys-60, Cys-64–Cys-71, and Cys-72–Cys-77.

The protein belongs to the three-finger toxin family. Short-chain subfamily. As to expression, expressed by the venom gland.

Its subcellular location is the secreted. The chain is Three-finger toxin MALT0070C from Micrurus altirostris (Uruguayan coral snake).